The sequence spans 657 residues: Acetyl-coenzyme A synthetase (657 aa).

Residues 192–195 and Thr-311 each bind CoA; that span reads RRGK. ATP-binding positions include 387 to 389, 411 to 416, Asp-504, Arg-519, and Arg-530; these read GEP and DTWWQT. His-543 and Val-546 together coordinate Mg(2+). Arg-592 is a CoA binding site. At Lys-617 the chain carries N6-acetyllysine.

Belongs to the ATP-dependent AMP-binding enzyme family. It depends on Mg(2+) as a cofactor. In terms of processing, acetylated. Deacetylation by the SIR2-homolog deacetylase activates the enzyme.

The enzyme catalyses acetate + ATP + CoA = acetyl-CoA + AMP + diphosphate. In terms of biological role, catalyzes the conversion of acetate into acetyl-CoA (AcCoA), an essential intermediate at the junction of anabolic and catabolic pathways. AcsA undergoes a two-step reaction. In the first half reaction, AcsA combines acetate with ATP to form acetyl-adenylate (AcAMP) intermediate. In the second half reaction, it can then transfer the acetyl group from AcAMP to the sulfhydryl group of CoA, forming the product AcCoA. The sequence is that of Acetyl-coenzyme A synthetase from Campylobacter jejuni subsp. jejuni serotype O:2 (strain ATCC 700819 / NCTC 11168).